An 896-amino-acid polypeptide reads, in one-letter code: MEKAKLTKNLKLKIKNAQLTKAAGLDKLKQKLAQAGSSDTKNSPASKAQTKEKSSKKTAGTPAPAPEVDLGATESTARRIRAKDRSSFAAEPTVTTALPGDASHLTLDAIPAIKAPEITSVTQKEQTLRECTDTSSVQQEEKKESSEETSPETPERIEETPIIRTRTEPKSVVSIKPKFGPTGKHINHLLAKTFKAPAKETKAASTEETTQQQPRQNDAASHNNKQQPSGTSSRPASSAPSYRRESTSNNNNNAKRGSERDRSKRSDESVKAFTGRDRYGLNEGSSEEDKWRKKRVHKTKKQAEEHVVQCPAHIKIALPITVKDLAAEMKLKASELIQKLFIHGMTYVVNDVLDSQTVVEYIGLEFGCTIEIDSSAKEKLCLVENTVRDEVNATDPEKLIIRSPIVAFMGHVDHGKTTIIDALRQSNMAASEAGAITQHTGAFKCTTPVGEITVLDTPGHEAFSAMRARGAEVCDIVVLVVAGDEGIKEQTIEAIEHAKGANITIVVAINKCDKPNFNVETVYRQLAELDLLPEAWGGSIATINTSAKTGEGLQDLLEMLALQAEVLELKADPSARARGLVIESELHKGLGAVATVLVQNGTLHLGEALVFNDCYGKVKTMHDEHNQLLQSATPSTPVLITGLSAIPKAGDPFIVVKNEKVAKEIISARLAGQQRSAALQKKRPNFDAVLQNKKTLKLIIKADVQGSIEALAHSILNIRSEKVDVEILSSGVGDISESDIRLASASKATVIGFHTSVESHAEPLIKNLNVKVCLFDIIYHAVDAIKEIMTGLLDPIAEEKNLGAAEIKATFKSSQLGTIYGCLVTEGTVVRNQKIRIIRDKEVLWKGSLSSLKRLKEDVKEVKKGMECGILLDNYQQAQVGDILQCYEVIYHPQTL.

Disordered regions lie at residues 32–99 (LAQA…TALP) and 117–304 (EITS…KQAE). Positions 35-48 (AGSSDTKNSPASKA) are enriched in polar residues. Basic and acidic residues predominate over residues 153-169 (TPERIEETPIIRTRTEP). Over residues 203–214 (AASTEETTQQQP) the composition is skewed to low complexity. Positions 215 to 227 (RQNDAASHNNKQQ) are enriched in polar residues. Over residues 228 to 241 (PSGTSSRPASSAPS) the composition is skewed to low complexity. Positions 256 to 280 (RGSERDRSKRSDESVKAFTGRDRYG) are enriched in basic and acidic residues. One can recognise a tr-type G domain in the interval 401–570 (IRSPIVAFMG…ALQAEVLELK (170 aa)). The interval 410-417 (GHVDHGKT) is G1. 410–417 (GHVDHGKT) provides a ligand contact to GTP. The interval 435-439 (AITQH) is G2. The G3 stretch occupies residues 456 to 459 (DTPG). GTP-binding positions include 456–460 (DTPGH) and 510–513 (NKCD). Residues 510 to 513 (NKCD) are G4. Residues 546 to 548 (SAK) are G5.

The protein belongs to the TRAFAC class translation factor GTPase superfamily. Classic translation factor GTPase family. IF-2 subfamily.

The protein localises to the cytoplasm. In terms of biological role, one of the essential components for the initiation of protein synthesis. Protects formylmethionyl-tRNA from spontaneous hydrolysis and promotes its binding to the 30S ribosomal subunits. Also involved in the hydrolysis of GTP during the formation of the 70S ribosomal complex. This chain is Translation initiation factor IF-2, found in Chlamydia trachomatis serovar L2 (strain ATCC VR-902B / DSM 19102 / 434/Bu).